A 120-amino-acid polypeptide reads, in one-letter code: Large ribosomal subunit protein bL20 (120 aa).

It belongs to the bacterial ribosomal protein bL20 family.

Functionally, binds directly to 23S ribosomal RNA and is necessary for the in vitro assembly process of the 50S ribosomal subunit. It is not involved in the protein synthesizing functions of that subunit. The polypeptide is Large ribosomal subunit protein bL20 (Paracidovorax citrulli (strain AAC00-1) (Acidovorax citrulli)).